The sequence spans 329 residues: Ubiquitin carboxyl-terminal hydrolase isozyme L5 (329 aa).

One can recognise a UCH catalytic domain in the interval glutamate 7–serine 225. Lysine 47 is modified (N6-succinyllysine). Cysteine 88 acts as the Nucleophile in catalysis. Residue lysine 158 is modified to N6-acetyllysine. The active-site Proton donor is the histidine 164. N6-succinyllysine is present on lysine 289. The ULD domain occupies asparagine 291 to lysine 319. The tract at residues valine 313–lysine 329 is interaction with ADRM1.

The protein belongs to the peptidase C12 family. As to quaternary structure, component of the 19S (PA700) regulatory complex of the 26S proteasome. Interacts with ADRM1 and NFRKB. Component of the INO80 complex; specifically part of a complex module associated with N-terminus of INO80.

The protein resides in the cytoplasm. It is found in the nucleus. It catalyses the reaction Thiol-dependent hydrolysis of ester, thioester, amide, peptide and isopeptide bonds formed by the C-terminal Gly of ubiquitin (a 76-residue protein attached to proteins as an intracellular targeting signal).. Its activity is regulated as follows. Activated by ADRM1. Inhibited by interaction with NFRKB. In terms of biological role, protease that specifically cleaves 'Lys-48'-linked polyubiquitin chains. Deubiquitinating enzyme associated with the 19S regulatory subunit of the 26S proteasome. Putative regulatory component of the INO80 complex; however is inactive in the INO80 complex and is activated by a transient interaction of the INO80 complex with the proteasome via ADRM1. The protein is Ubiquitin carboxyl-terminal hydrolase isozyme L5 (Uchl5) of Mus musculus (Mouse).